Reading from the N-terminus, the 147-residue chain is Hemoglobin subunit delta (147 aa).

The Globin domain maps to 3–147 (NLTAAEKTQV…VANALAHKYH (145 aa)). 2 residues coordinate heme b: His64 and His93.

This sequence belongs to the globin family. In terms of assembly, heterotetramer of two delta chains and two alpha chains. Red blood cells.

The chain is Hemoglobin subunit delta (HBD) from Elephas maximus (Indian elephant).